Reading from the N-terminus, the 66-residue chain is DNA-directed RNA polymerase subunit Rpo10 (66 aa).

Positions 7, 10, 44, and 45 each coordinate Zn(2+).

This sequence belongs to the archaeal Rpo10/eukaryotic RPB10 RNA polymerase subunit family. As to quaternary structure, part of the RNA polymerase complex. Requires Zn(2+) as cofactor.

Its subcellular location is the cytoplasm. The enzyme catalyses RNA(n) + a ribonucleoside 5'-triphosphate = RNA(n+1) + diphosphate. DNA-dependent RNA polymerase (RNAP) catalyzes the transcription of DNA into RNA using the four ribonucleoside triphosphates as substrates. This is DNA-directed RNA polymerase subunit Rpo10 from Pyrobaculum aerophilum (strain ATCC 51768 / DSM 7523 / JCM 9630 / CIP 104966 / NBRC 100827 / IM2).